The sequence spans 193 residues: Dirigent protein 11 (193 aa).

An N-terminal signal peptide occupies residues 1–33 (MLQITNMATPFLLLLLPLIFSTVLLLTITVTQS). N-linked (GlcNAc...) asparagine glycans are attached at residues Asn-78 and Asn-136.

The protein belongs to the plant dirigent protein family. Homodimer.

It localises to the secreted. It is found in the extracellular space. Its subcellular location is the apoplast. In terms of biological role, dirigent proteins impart stereoselectivity on the phenoxy radical-coupling reaction, yielding optically active lignans from two molecules of coniferyl alcohol in the biosynthesis of lignans, flavonolignans, and alkaloids and thus plays a central role in plant secondary metabolism. In Arabidopsis thaliana (Mouse-ear cress), this protein is Dirigent protein 11 (DIR11).